Reading from the N-terminus, the 402-residue chain is Zinc finger protein 586 (402 aa).

In terms of domain architecture, KRAB spans V15–P87. The C2H2-type 1; degenerate zinc-finger motif lies at Y88–R116. The segment at Y122–H144 adopts a C2H2-type 2; degenerate zinc-finger fold. The C2H2-type 3; degenerate zinc-finger motif lies at Y150–H172. C2H2-type zinc fingers lie at residues Y178 to H200, Y206 to H228, Y234 to H256, Y262 to H284, Y290 to H312, H317 to H339, Y345 to H367, and Y373 to H395.

It belongs to the krueppel C2H2-type zinc-finger protein family.

It localises to the nucleus. In terms of biological role, may be involved in transcriptional regulation. The polypeptide is Zinc finger protein 586 (ZNF586) (Homo sapiens (Human)).